Reading from the N-terminus, the 375-residue chain is Platelet-derived growth factor receptor-like protein (375 aa).

Residues 1-21 (MKIWLLLGLLLMHEALEDVTG) form the signal peptide. Residues 20–64 (TGQHPPKNKRPKEPGENRIKPTNKKVKPKIPKIKDRDSADPTPKT) are disordered. The segment covering 40-50 (PTNKKVKPKIP) has biased composition (basic residues). One can recognise an Ig-like C2-type 1 domain in the interval 62 to 159 (PKTQSIMTQM…GYVCRRDEAK (98 aa)). Residues C96 and C143 are joined by a disulfide bond. N-linked (GlcNAc...) asparagine glycans are attached at residues N132 and N219. The 102-residue stretch at 272 to 373 (PSTTILASSN…GQTTVATTVE (102 aa)) folds into the Ig-like C2-type 2 domain. A disulfide bridge links C293 with C357.

In terms of assembly, forms a complex composed of PDGFRL, TNK2 and GRB2.

It localises to the secreted. The polypeptide is Platelet-derived growth factor receptor-like protein (PDGFRL) (Bos taurus (Bovine)).